The chain runs to 116 residues: Large ribosomal subunit protein uL18 (116 aa).

It belongs to the universal ribosomal protein uL18 family. As to quaternary structure, part of the 50S ribosomal subunit; part of the 5S rRNA/L5/L18/L25 subcomplex. Contacts the 5S and 23S rRNAs.

Functionally, this is one of the proteins that bind and probably mediate the attachment of the 5S RNA into the large ribosomal subunit, where it forms part of the central protuberance. The polypeptide is Large ribosomal subunit protein uL18 (Pseudomonas fluorescens (strain SBW25)).